Consider the following 179-residue polypeptide: Large ribosomal subunit protein uL5 (179 aa).

Belongs to the universal ribosomal protein uL5 family. In terms of assembly, part of the 50S ribosomal subunit; part of the 5S rRNA/L5/L18/L25 subcomplex. Contacts the 5S rRNA and the P site tRNA. Forms a bridge to the 30S subunit in the 70S ribosome.

This is one of the proteins that bind and probably mediate the attachment of the 5S RNA into the large ribosomal subunit, where it forms part of the central protuberance. In the 70S ribosome it contacts protein S13 of the 30S subunit (bridge B1b), connecting the 2 subunits; this bridge is implicated in subunit movement. Contacts the P site tRNA; the 5S rRNA and some of its associated proteins might help stabilize positioning of ribosome-bound tRNAs. The sequence is that of Large ribosomal subunit protein uL5 from Desulfatibacillum aliphaticivorans.